The primary structure comprises 656 residues: Translation factor GUF1 homolog, mitochondrial (656 aa).

The N-terminal 29 residues, Met1 to Phe29, are a transit peptide targeting the mitochondrion. The region spanning Glu54 to Val238 is the tr-type G domain. Residues Ala63–Ser70, Asp131–His135, and Thr185–Asp188 each bind GTP.

Belongs to the TRAFAC class translation factor GTPase superfamily. Classic translation factor GTPase family. LepA subfamily.

The protein resides in the mitochondrion inner membrane. The catalysed reaction is GTP + H2O = GDP + phosphate + H(+). In terms of biological role, promotes mitochondrial protein synthesis. May act as a fidelity factor of the translation reaction, by catalyzing a one-codon backward translocation of tRNAs on improperly translocated ribosomes. Binds to mitochondrial ribosomes in a GTP-dependent manner. The protein is Translation factor GUF1 homolog, mitochondrial of Phytophthora infestans (strain T30-4) (Potato late blight agent).